Consider the following 118-residue polypeptide: UPF0342 protein BpOF4_11360 (118 aa).

This sequence belongs to the UPF0342 family.

In Alkalihalophilus pseudofirmus (strain ATCC BAA-2126 / JCM 17055 / OF4) (Bacillus pseudofirmus), this protein is UPF0342 protein BpOF4_11360.